The chain runs to 817 residues: Cargo-transport protein YPP1 (817 aa).

This sequence belongs to the YPP1 family. Interacts with ribosomes.

The protein resides in the cytoplasmic granule. It is found in the cell membrane. In terms of biological role, involved in endocytosis. The sequence is that of Cargo-transport protein YPP1 (YPP1) from Saccharomyces cerevisiae (strain ATCC 204508 / S288c) (Baker's yeast).